Consider the following 414-residue polypeptide: Histidine--tRNA ligase (414 aa).

It belongs to the class-II aminoacyl-tRNA synthetase family. Homodimer.

The protein localises to the cytoplasm. The catalysed reaction is tRNA(His) + L-histidine + ATP = L-histidyl-tRNA(His) + AMP + diphosphate + H(+). The chain is Histidine--tRNA ligase from Rickettsia africae (strain ESF-5).